The sequence spans 208 residues: UPF0319 protein VSAL_I2129 (208 aa).

The first 21 residues, 1–21 (MKFHSFLAAGLCLLTSLSASA), serve as a signal peptide directing secretion.

The protein belongs to the UPF0319 family.

In Aliivibrio salmonicida (strain LFI1238) (Vibrio salmonicida (strain LFI1238)), this protein is UPF0319 protein VSAL_I2129.